Here is a 297-residue protein sequence, read N- to C-terminus: Glucuronoxylan 4-O-methyltransferase 3 (297 aa).

The chain crosses the membrane as a helical span at residues 9–29 (LNLKVIFIGSSILILIIIYLA). Low complexity predominate over residues 35–47 (SSSSKPISKTNLS). The segment at 35–63 (SSSSKPISKTNLSQEEEETQHKQEGCPTT) is disordered.

This sequence belongs to the methyltransferase superfamily. In terms of tissue distribution, expressed in hypocotyls, roots, rosette leaves, stems and siliques.

Its subcellular location is the golgi apparatus membrane. It catalyses the reaction glucuronoxylan D-glucuronate + n S-adenosyl-L-methionine = glucuronoxylan 4-O-methyl-D-glucuronate + n S-adenosyl-L-homocysteine + n H(+). Functionally, methyltransferase catalyzing 4-O-methylation of glucuronic acid side chains on xylan. This chain is Glucuronoxylan 4-O-methyltransferase 3 (GXM3), found in Arabidopsis thaliana (Mouse-ear cress).